We begin with the raw amino-acid sequence, 430 residues long: Mannosylglucosylglycerate synthase (430 aa).

The protein belongs to the glycosyltransferase group 1 family. A divalent metal cation is required as a cofactor.

The catalysed reaction is (2R)-2-O-(alpha-D-glucopyranosyl)-glycerate + GDP-alpha-D-mannose = (2R)-2-O-[alpha-D-mannopyranosyl-(1-&gt;2)-alpha-D-glucopyranosyl]-glycerate + GDP + H(+). Involved in the biosynthesis of the compatible solute mannosylglucosylglycerate through a nonphosphorylating pathway. Catalyzes the synthesis of mannosylglucosylglycerate (MGG) from glucosylglycerate (GG) and GDP-mannose. The sequence is that of Mannosylglucosylglycerate synthase from Petrotoga mobilis (strain DSM 10674 / SJ95).